The following is a 460-amino-acid chain: NADH-ubiquinone oxidoreductase chain 4 (460 aa).

The next 13 helical transmembrane spans lie at 22 to 42 (WLWP…LLWF), 59 to 79 (IDPL…LMIL), 93 to 113 (QRIY…AFSA), 114 to 134 (TELI…LIII), 148 to 168 (TYFL…LLLM), 195 to 215 (FWWT…GVHL), 225 to 245 (PIAG…YGMM), 258 to 278 (MAYP…SICL), 286 to 306 (LIAY…MIQT), 310 to 330 (FAGA…LFCL), 351 to 371 (VMLP…LALP), 394 to 414 (ILLT…MFLM), and 440 to 460 (LHLI…GWTF).

The protein belongs to the complex I subunit 4 family.

It localises to the mitochondrion membrane. The enzyme catalyses a ubiquinone + NADH + 5 H(+)(in) = a ubiquinol + NAD(+) + 4 H(+)(out). In terms of biological role, core subunit of the mitochondrial membrane respiratory chain NADH dehydrogenase (Complex I) that is believed to belong to the minimal assembly required for catalysis. Complex I functions in the transfer of electrons from NADH to the respiratory chain. The immediate electron acceptor for the enzyme is believed to be ubiquinone. The chain is NADH-ubiquinone oxidoreductase chain 4 (MT-ND4) from Squalus acanthias (Spiny dogfish).